A 498-amino-acid chain; its full sequence is ATP synthase subunit beta, chloroplastic (498 aa).

Residue 172-179 (GGAGVGKT) participates in ATP binding.

Belongs to the ATPase alpha/beta chains family. As to quaternary structure, F-type ATPases have 2 components, CF(1) - the catalytic core - and CF(0) - the membrane proton channel. CF(1) has five subunits: alpha(3), beta(3), gamma(1), delta(1), epsilon(1). CF(0) has four main subunits: a(1), b(1), b'(1) and c(9-12).

The protein resides in the plastid. The protein localises to the chloroplast thylakoid membrane. It catalyses the reaction ATP + H2O + 4 H(+)(in) = ADP + phosphate + 5 H(+)(out). Its function is as follows. Produces ATP from ADP in the presence of a proton gradient across the membrane. The catalytic sites are hosted primarily by the beta subunits. The protein is ATP synthase subunit beta, chloroplastic of Gossypium barbadense (Sea Island cotton).